Consider the following 129-residue polypeptide: Holo-[acyl-carrier-protein] synthase (129 aa).

Residues D8 and E58 each contribute to the Mg(2+) site.

This sequence belongs to the P-Pant transferase superfamily. AcpS family. The cofactor is Mg(2+).

The protein localises to the cytoplasm. The enzyme catalyses apo-[ACP] + CoA = holo-[ACP] + adenosine 3',5'-bisphosphate + H(+). Transfers the 4'-phosphopantetheine moiety from coenzyme A to a Ser of acyl-carrier-protein. This chain is Holo-[acyl-carrier-protein] synthase, found in Acidithiobacillus ferrooxidans (strain ATCC 53993 / BNL-5-31) (Leptospirillum ferrooxidans (ATCC 53993)).